Consider the following 506-residue polypeptide: Probable Xaa-Pro aminopeptidase BDBG_08406 (506 aa).

Residues Asp285, Asp296, Glu433, and Glu471 each contribute to the Mn(2+) site.

The protein belongs to the peptidase M24B family. The cofactor is Mn(2+).

It carries out the reaction Release of any N-terminal amino acid, including proline, that is linked to proline, even from a dipeptide or tripeptide.. Catalyzes the removal of a penultimate prolyl residue from the N-termini of peptides. This is Probable Xaa-Pro aminopeptidase BDBG_08406 from Blastomyces gilchristii (strain SLH14081) (Blastomyces dermatitidis).